Here is a 102-residue protein sequence, read N- to C-terminus: PE family immunomodulator PE15 (102 aa).

The region spanning 3–91 is the PE domain; the sequence is LRVVPESLAG…SGASYAARDA (89 aa).

This sequence belongs to the mycobacterial PE family.

It is found in the secreted. The protein localises to the cell envelope. It localises to the cell surface. Functionally, may play a pivotal role in the evasion of host immune response by M.tuberculosis. Mediates production of IL-10 via activation of the p38 and ERK1/2 mitogen-activated protein kinase (MAPK) signaling pathways. This chain is PE family immunomodulator PE15 (PE15), found in Mycobacterium tuberculosis (strain CDC 1551 / Oshkosh).